A 433-amino-acid chain; its full sequence is Serine--tRNA ligase (433 aa).

235-237 provides a ligand contact to L-serine; sequence TSE. Residue 266 to 268 participates in ATP binding; sequence RSE. Position 289 (Glu289) interacts with L-serine. Residue 353–356 participates in ATP binding; the sequence is EISS. Ser388 is a binding site for L-serine.

The protein belongs to the class-II aminoacyl-tRNA synthetase family. Type-1 seryl-tRNA synthetase subfamily. In terms of assembly, homodimer. The tRNA molecule binds across the dimer.

It is found in the cytoplasm. The enzyme catalyses tRNA(Ser) + L-serine + ATP = L-seryl-tRNA(Ser) + AMP + diphosphate + H(+). It carries out the reaction tRNA(Sec) + L-serine + ATP = L-seryl-tRNA(Sec) + AMP + diphosphate + H(+). It participates in aminoacyl-tRNA biosynthesis; selenocysteinyl-tRNA(Sec) biosynthesis; L-seryl-tRNA(Sec) from L-serine and tRNA(Sec): step 1/1. Its function is as follows. Catalyzes the attachment of serine to tRNA(Ser). Is also able to aminoacylate tRNA(Sec) with serine, to form the misacylated tRNA L-seryl-tRNA(Sec), which will be further converted into selenocysteinyl-tRNA(Sec). The sequence is that of Serine--tRNA ligase from Burkholderia cenocepacia (strain ATCC BAA-245 / DSM 16553 / LMG 16656 / NCTC 13227 / J2315 / CF5610) (Burkholderia cepacia (strain J2315)).